The primary structure comprises 1011 residues: Retinoblastoma-related protein (1011 aa).

The interval 1–22 (MSQASVDMEDVKPSISLPSDDG) is disordered. The segment at 411–612 (TPVSTAMTTA…ERGSSMYNSL (202 aa)) is domain A. The interval 411-860 (TPVSTAMTTA…NEVFIPSVKP (450 aa)) is pocket. The interval 613 to 729 (IVARPTLAAE…PAGGGETCAE (117 aa)) is spacer. Residues 730 to 860 (TGINIFFNKI…NEVFIPSVKP (131 aa)) are domain B. Residues 872–903 (QKSKSSPEDSNNADSQIPGSPRLSPFPNLPDM) are disordered. Over residues 873–889 (KSKSSPEDSNNADSQIP) the composition is skewed to polar residues.

This sequence belongs to the retinoblastoma protein (RB) family.

Its subcellular location is the nucleus. Its function is as follows. Regulator of biological processes that recruits a histone deacetylase to control gene transcription. May play a role in the entry into mitosis, negatively regulating the cell proliferation. Formation of stable complexes with geminiviridae replication-associated proteins may create a cellular environment which favors viral DNA replication. The sequence is that of Retinoblastoma-related protein (Rb1) from Cocos nucifera (Coconut palm).